Here is a 317-residue protein sequence, read N- to C-terminus: 4-hydroxy-3-methylbut-2-enyl diphosphate reductase (317 aa).

Cysteine 12 provides a ligand contact to [4Fe-4S] cluster. The (2E)-4-hydroxy-3-methylbut-2-enyl diphosphate site is built by histidine 41 and histidine 74. Dimethylallyl diphosphate contacts are provided by histidine 41 and histidine 74. Isopentenyl diphosphate contacts are provided by histidine 41 and histidine 74. Cysteine 97 contacts [4Fe-4S] cluster. Residue histidine 125 participates in (2E)-4-hydroxy-3-methylbut-2-enyl diphosphate binding. Histidine 125 provides a ligand contact to dimethylallyl diphosphate. Position 125 (histidine 125) interacts with isopentenyl diphosphate. Catalysis depends on glutamate 127, which acts as the Proton donor. (2E)-4-hydroxy-3-methylbut-2-enyl diphosphate is bound at residue threonine 168. Cysteine 198 provides a ligand contact to [4Fe-4S] cluster. Serine 226, serine 227, asparagine 228, and serine 270 together coordinate (2E)-4-hydroxy-3-methylbut-2-enyl diphosphate. Dimethylallyl diphosphate contacts are provided by serine 226, serine 227, asparagine 228, and serine 270. 4 residues coordinate isopentenyl diphosphate: serine 226, serine 227, asparagine 228, and serine 270.

This sequence belongs to the IspH family. In terms of assembly, homodimer. Requires [4Fe-4S] cluster as cofactor.

It carries out the reaction isopentenyl diphosphate + 2 oxidized [2Fe-2S]-[ferredoxin] + H2O = (2E)-4-hydroxy-3-methylbut-2-enyl diphosphate + 2 reduced [2Fe-2S]-[ferredoxin] + 2 H(+). The catalysed reaction is dimethylallyl diphosphate + 2 oxidized [2Fe-2S]-[ferredoxin] + H2O = (2E)-4-hydroxy-3-methylbut-2-enyl diphosphate + 2 reduced [2Fe-2S]-[ferredoxin] + 2 H(+). It functions in the pathway isoprenoid biosynthesis; dimethylallyl diphosphate biosynthesis; dimethylallyl diphosphate from (2E)-4-hydroxy-3-methylbutenyl diphosphate: step 1/1. The protein operates within isoprenoid biosynthesis; isopentenyl diphosphate biosynthesis via DXP pathway; isopentenyl diphosphate from 1-deoxy-D-xylulose 5-phosphate: step 6/6. Functionally, catalyzes the conversion of 1-hydroxy-2-methyl-2-(E)-butenyl 4-diphosphate (HMBPP) into a mixture of isopentenyl diphosphate (IPP) and dimethylallyl diphosphate (DMAPP). Acts in the terminal step of the DOXP/MEP pathway for isoprenoid precursor biosynthesis. This chain is 4-hydroxy-3-methylbut-2-enyl diphosphate reductase, found in Yersinia enterocolitica serotype O:8 / biotype 1B (strain NCTC 13174 / 8081).